The following is a 90-amino-acid chain: Probable Fe(2+)-trafficking protein (90 aa).

Belongs to the Fe(2+)-trafficking protein family.

In terms of biological role, could be a mediator in iron transactions between iron acquisition and iron-requiring processes, such as synthesis and/or repair of Fe-S clusters in biosynthetic enzymes. This is Probable Fe(2+)-trafficking protein from Vibrio atlanticus (strain LGP32) (Vibrio splendidus (strain Mel32)).